Reading from the N-terminus, the 485-residue chain is Glutamyl-tRNA(Gln) amidotransferase subunit A (485 aa).

Active-site charge relay system residues include lysine 75 and serine 150. The active-site Acyl-ester intermediate is serine 174.

The protein belongs to the amidase family. GatA subfamily. As to quaternary structure, heterotrimer of A, B and C subunits.

The catalysed reaction is L-glutamyl-tRNA(Gln) + L-glutamine + ATP + H2O = L-glutaminyl-tRNA(Gln) + L-glutamate + ADP + phosphate + H(+). In terms of biological role, allows the formation of correctly charged Gln-tRNA(Gln) through the transamidation of misacylated Glu-tRNA(Gln) in organisms which lack glutaminyl-tRNA synthetase. The reaction takes place in the presence of glutamine and ATP through an activated gamma-phospho-Glu-tRNA(Gln). The protein is Glutamyl-tRNA(Gln) amidotransferase subunit A of Trichodesmium erythraeum (strain IMS101).